A 158-amino-acid chain; its full sequence is Snaclec coagulation factor X-activating enzyme light chain 2 (158 aa).

An N-terminal signal peptide occupies residues 1–24 (MGRFISVSFGLLVVFLSLSGTGAG). 3 cysteine pairs are disulfide-bonded: cysteine 27/cysteine 38, cysteine 55/cysteine 152, and cysteine 127/cysteine 144. Positions 34–153 (YRYFCYRVFK…CEERYLFVCK (120 aa)) constitute a C-type lectin domain. N-linked (GlcNAc...) (complex) asparagine glycosylation is present at asparagine 82.

Belongs to the snaclec family. Heterotrimer; disulfide-linked. The heterotrimer consists of 1 heavy chain (a metalloproteinase) and 2 light chains: LC1 and LC2. Post-translationally, N-glycosylated; probably required for conformation. Removal of easily accessible sugars does not change its functional capacity, but removal of the core sugars with N-glycanase causes a virtually complete loss of enzyme activity, apparently as a result of major conformational changes in the molecule. Not O-glycosylated. As to expression, expressed by the venom gland.

The protein localises to the secreted. In terms of biological role, regulatory subunit of the blood coagulation factor X- and IX-activating enzyme. The enzyme activates coagulation factor X (F10) by cleaving the Arg-Ile bond and is also able to activate coagulation factor IX (F9) and protein S (PROS1) by specific cleavage of Arg-Ile and Arg-Val bonds. May serve as an exosite by which the enzyme recognizes and binds to the Gla domain of factor X (F10) and factor IX (F9) in a calcium-dependent manner. This chain is Snaclec coagulation factor X-activating enzyme light chain 2 (LC2), found in Daboia siamensis (Eastern Russel's viper).